A 298-amino-acid chain; its full sequence is Tryptophan 2,3-dioxygenase (298 aa).

Substrate contacts are provided by residues 51–55, Tyr-113, and Arg-117; that span reads FIIQH. A heme-binding site is contributed by His-240. Thr-254 serves as a coordination point for substrate.

This sequence belongs to the tryptophan 2,3-dioxygenase family. Homotetramer. Requires heme as cofactor.

It carries out the reaction L-tryptophan + O2 = N-formyl-L-kynurenine. It functions in the pathway amino-acid degradation; L-tryptophan degradation via kynurenine pathway; L-kynurenine from L-tryptophan: step 1/2. Its function is as follows. Heme-dependent dioxygenase that catalyzes the oxidative cleavage of the L-tryptophan (L-Trp) pyrrole ring and converts L-tryptophan to N-formyl-L-kynurenine. Catalyzes the oxidative cleavage of the indole moiety. The polypeptide is Tryptophan 2,3-dioxygenase (Xanthomonas campestris pv. campestris (strain 8004)).